The following is a 1316-amino-acid chain: DNA-directed RNA polymerase subunit beta' (1316 aa).

Residues cysteine 60, cysteine 62, cysteine 75, and cysteine 78 each coordinate Zn(2+). Mg(2+) contacts are provided by aspartate 535, aspartate 537, and aspartate 539. Cysteine 891, cysteine 968, cysteine 975, and cysteine 978 together coordinate Zn(2+).

This sequence belongs to the RNA polymerase beta' chain family. The RNAP catalytic core consists of 2 alpha, 1 beta, 1 beta' and 1 omega subunit. When a sigma factor is associated with the core the holoenzyme is formed, which can initiate transcription. Mg(2+) serves as cofactor. The cofactor is Zn(2+).

It catalyses the reaction RNA(n) + a ribonucleoside 5'-triphosphate = RNA(n+1) + diphosphate. DNA-dependent RNA polymerase catalyzes the transcription of DNA into RNA using the four ribonucleoside triphosphates as substrates. In Mycobacterium avium (strain 104), this protein is DNA-directed RNA polymerase subunit beta'.